The chain runs to 39 residues: Potassium channel toxin alpha-KTx 2.2 (39 aa).

Cystine bridges form between C7-C29, C13-C34, and C17-C36. Residues 37–39 (YPH) form an interaction with Kv1.3 channels region.

This sequence belongs to the short scorpion toxin superfamily. Potassium channel inhibitor family. Alpha-KTx 02 subfamily. As to expression, expressed by the venom gland.

Its subcellular location is the secreted. In terms of biological role, potent inhibitor of voltage-gated potassium channels such as Kv1.1/KCNA1 (IC(50)=0.144 nM), Kv1.2/KCNA2 (IC(50)=0.675 nM), Kv1.3/KCNA3 (IC(50)=0.23 nM) and Shaker (Kd=160 nM). Suppresses expression of the Kv1.3/KCNA3 channel in lipopolysaccharide (LPS)-stimulated mouse macrophages. Down-regulates secretion of nitric oxide (NO) and inflammatory cytokines, such as TNF-alpha/TNF, IL-1beta/IL1B and IL6, in LPS-stimulated mouse macrophages in a manner dependent on Kv1.3/KCNA3 channel blockage. Reduces activation of MAPK and NF-kappa-B signaling pathways in LPS-stimulated mouse macrophages. Modulates intracellular Ca(2+) signaling in human PMA/ionomycin-triggered T-cells. Interferes with the activation of the MAPK, NF-kappa-B and NFATc1 pathways in human PMA/ionomycin-triggered T-cells. Reduces proliferation of human PMA/ionomycin-triggered T-cells. Down-regulates secretion of cytokines, such as TNF-alpha/TNF and IL2, in human PMA/ionomycin-triggered T-cells. The chain is Potassium channel toxin alpha-KTx 2.2 from Centruroides margaritatus (Central American bark Scorpion).